The sequence spans 326 residues: Phosphate acyltransferase (326 aa).

It belongs to the PlsX family. As to quaternary structure, homodimer. Probably interacts with PlsY.

Its subcellular location is the cytoplasm. The catalysed reaction is a fatty acyl-[ACP] + phosphate = an acyl phosphate + holo-[ACP]. It participates in lipid metabolism; phospholipid metabolism. In terms of biological role, catalyzes the reversible formation of acyl-phosphate (acyl-PO(4)) from acyl-[acyl-carrier-protein] (acyl-ACP). This enzyme utilizes acyl-ACP as fatty acyl donor, but not acyl-CoA. The sequence is that of Phosphate acyltransferase from Macrococcus caseolyticus (strain JCSC5402) (Macrococcoides caseolyticum).